Consider the following 61-residue polypeptide: Large ribosomal subunit protein bL32 (61 aa).

Residues 1–16 (MAVPKRKTSPSRRGMR) are compositionally biased toward basic residues. The segment at 1-61 (MAVPKRKTSP…RQILKPKAEA (61 aa)) is disordered. Positions 28-44 (VEDKDSGELRRPHHLDL) are enriched in basic and acidic residues.

It belongs to the bacterial ribosomal protein bL32 family.

In Xanthobacter autotrophicus (strain ATCC BAA-1158 / Py2), this protein is Large ribosomal subunit protein bL32.